The sequence spans 408 residues: MSWDQVWIDINIATMSPKISEPYGAITDAALAVQDGKIAWVGKRSDLPEFDVFGTPIYKGKGGWITPGLIDAHTHLIFAGNRANEFELRLKGASYEEIARSGGGIISTVNACREADEAELFELGRQRLNALAKEGVTTVEIKSGYGLDIETELKILRVARELGKHHHVDVKTTFLGAHAIPPEYKNDSDAYVDLVINEMLPKVMAENLADAVDVFCENIAFNLEQTERVLTAAIDAGLDIKLHAEQLSNMGGSAMAARLGAKSVDHIEYLDEAGVKALSESGTCATLLPGAFYFLRETQHPPIDLLRKYQVPMVVASDYNPGSSPLCSSLLMLNMACTLLRLTPEEALAGMTRNAAKALGIDDHVGVIEVGMTADFCIWNISTPAELAYTYGVASCVDVVKNGNLVHQ.

His-73 and His-75 together coordinate Fe(3+). Positions 73 and 75 each coordinate Zn(2+). 3 residues coordinate 4-imidazolone-5-propanoate: Arg-82, Tyr-145, and His-178. Tyr-145 provides a ligand contact to N-formimidoyl-L-glutamate. Residue His-243 coordinates Fe(3+). His-243 serves as a coordination point for Zn(2+). Gln-246 serves as a coordination point for 4-imidazolone-5-propanoate. Asp-318 serves as a coordination point for Fe(3+). Asp-318 contributes to the Zn(2+) binding site. The N-formimidoyl-L-glutamate site is built by Asn-320 and Gly-322. Ser-323 is a binding site for 4-imidazolone-5-propanoate.

Belongs to the metallo-dependent hydrolases superfamily. HutI family. Zn(2+) is required as a cofactor. It depends on Fe(3+) as a cofactor.

The protein resides in the cytoplasm. It catalyses the reaction 4-imidazolone-5-propanoate + H2O = N-formimidoyl-L-glutamate. The protein operates within amino-acid degradation; L-histidine degradation into L-glutamate; N-formimidoyl-L-glutamate from L-histidine: step 3/3. Catalyzes the hydrolytic cleavage of the carbon-nitrogen bond in imidazolone-5-propanoate to yield N-formimidoyl-L-glutamate. It is the third step in the universal histidine degradation pathway. In Shewanella halifaxensis (strain HAW-EB4), this protein is Imidazolonepropionase.